We begin with the raw amino-acid sequence, 263 residues long: tRNA dimethylallyltransferase (263 aa).

Belongs to the IPP transferase family. In terms of assembly, monomer. It depends on Mg(2+) as a cofactor.

The catalysed reaction is adenosine(37) in tRNA + dimethylallyl diphosphate = N(6)-dimethylallyladenosine(37) in tRNA + diphosphate. In terms of biological role, catalyzes the transfer of a dimethylallyl group onto the adenine at position 37 in tRNAs that read codons beginning with uridine, leading to the formation of N6-(dimethylallyl)adenosine (i(6)A). The sequence is that of tRNA dimethylallyltransferase from Leifsonia xyli subsp. xyli (strain CTCB07).